We begin with the raw amino-acid sequence, 906 residues long: MANFYPDFLNMQPPPNYVAGLGRGATGFTTRSDLGPAQELPSQESIKAAIEQRKSEIEEEEDIDPRYQDPDNEVALFATAPYDHEDEEADKIYQSVEEHLSKRRKSQREKQEQLQKEKYEKENPKVSSQFADLKRGLSTLTDEDWNNIPEPGDLTRKKRTKQPRRERFYATSDFVLASARNENQAISNFAVDTQAGTETPDMNGTKTNFVEIGAARDKVLGIKLAQASSNLTSPSTIDPKGYLTSLNSMVPKNANDLGDIRKARKLLQSVIETNPKHASGWVAAARLEEVANKLSQAQSLILKGCENCSRSEDVWLEAIRLHPAAEAKVIIANAVKKLPKSVTLWLEAEKLENQAQHKKRIIKKALEFNPTSVSLWKEAVNLEEEVDNARILLARAVELIPMSIDLWLALARLETYENAKKVLNKARQTIRTSHEVWIAAARLEEQQGNVSRVEKIMARGVSELQATGGMLQRDQWLSEAEKCETEGAVITAQAIINTCLGVGLDEEDQFDTWLDDAQSFIARKCIDCARAVFAFSLRVYPKSEKLWLRAVELEKLYGTTESVCSILEKAVESCPKAEILWLLYAKERKNVNDIAGARNILGRAFEYNSNSEEIWLAAVRIEFVNNENERARKLLARARIESGTERIWTKSISLERILDEKDRALQLLENALKIYPHYDKLYMMKGQIFEDKEQIELARDAYLAGTKVCPYSIPLWLLLAKLEEKQSVIRARVVFDRAKVKNPKNEFLWLELIKMELRAGNISQVRAALAKALQECPSSGLLWTEAIWLEPRAQRKTRATDALRKCEGNAHLLCTIARMLWLEKKADKARSWFLKAVKADQDNGDVWCWFYKYSLEAGNEDQQKEVLTSFETADPHHGYFWPSITKDIKNSRKTPQELLHLAINVL.

Disordered regions lie at residues 50–129 and 142–164; these read IEQR…VSSQ and DEDWNNIPEPGDLTRKKRTKQPR. Residues 108 to 124 show a composition bias toward basic and acidic residues; the sequence is REKQEQLQKEKYEKENP. Residue S235 is modified to Phosphoserine. HAT repeat units follow at residues 258 to 290, 322 to 353, 354 to 384, 385 to 416, 524 to 556, 558 to 590, 592 to 624, 693 to 725, 726 to 758, 760 to 792, and 824 to 856; these read GDIRKARKLLQSVIETNPKHASGWVAAARLEEV, HPAAEAKVIIANAVKKLPKSVTLWLEAEKLEN, QAQHKKRIIKKALEFNPTSVSLWKEAVNLEE, EVDNARILLARAVELIPMSIDLWLALARLETY, KCIDCARAVFAFSLRVYPKSEKLWLRAVELEKL, GTTESVCSILEKAVESCPKAEILWLLYAKERKN, NDIAGARNILGRAFEYNSNSEEIWLAAVRIEFV, EQIELARDAYLAGTKVCPYSIPLWLLLAKLEEK, QSVIRARVVFDRAKVKNPKNEFLWLELIKMELR, GNISQVRAALAKALQECPSSGLLWTEAIWLEPR, and KKADKARSWFLKAVKADQDNGDVWCWFYKYSLE.

As to quaternary structure, interacts with brr2 and spp42.

The protein resides in the nucleus. Involved in pre-mRNA splicing. Interacts with prp6 and prp13. May also be involved in the regulation of the G0-G1/G2 transition. Required for pre-spliceosome formation, which is the first step of pre-mRNA splicing. This protein is associated with snRNP U5. Has a role in branch site-3' splice site selection. Associates with the branch site-3' splice 3'-exon region. In Schizosaccharomyces pombe (strain 972 / ATCC 24843) (Fission yeast), this protein is Pre-mRNA-splicing factor prp1 (prp1).